Reading from the N-terminus, the 297-residue chain is tRNA-cytidine(32) 2-sulfurtransferase (297 aa).

A PP-loop motif motif is present at residues 45 to 50 (SGGKDS). The [4Fe-4S] cluster site is built by Cys120, Cys123, and Cys211.

This sequence belongs to the TtcA family. Homodimer. The cofactor is Mg(2+). [4Fe-4S] cluster serves as cofactor.

The protein localises to the cytoplasm. It catalyses the reaction cytidine(32) in tRNA + S-sulfanyl-L-cysteinyl-[cysteine desulfurase] + AH2 + ATP = 2-thiocytidine(32) in tRNA + L-cysteinyl-[cysteine desulfurase] + A + AMP + diphosphate + H(+). Its pathway is tRNA modification. Its function is as follows. Catalyzes the ATP-dependent 2-thiolation of cytidine in position 32 of tRNA, to form 2-thiocytidine (s(2)C32). The sulfur atoms are provided by the cysteine/cysteine desulfurase (IscS) system. The sequence is that of tRNA-cytidine(32) 2-sulfurtransferase from Vibrio parahaemolyticus serotype O3:K6 (strain RIMD 2210633).